The primary structure comprises 155 residues: Transcription antitermination protein NusB (155 aa).

This sequence belongs to the NusB family.

Involved in transcription antitermination. Required for transcription of ribosomal RNA (rRNA) genes. Binds specifically to the boxA antiterminator sequence of the ribosomal RNA (rrn) operons. This Vibrio atlanticus (strain LGP32) (Vibrio splendidus (strain Mel32)) protein is Transcription antitermination protein NusB.